Reading from the N-terminus, the 126-residue chain is Fluoride-specific ion channel FluC (126 aa).

The next 4 membrane-spanning stretches (helical) occupy residues 5–25, 35–55, 68–88, and 99–119; these read LHFL…WLLG, WGTL…LGLI, ALVT…AEVV, and AAGY…LGLA. Residues Gly75 and Thr78 each coordinate Na(+).

This sequence belongs to the fluoride channel Fluc/FEX (TC 1.A.43) family.

The protein localises to the cell inner membrane. The enzyme catalyses fluoride(in) = fluoride(out). Its activity is regulated as follows. Na(+) is not transported, but it plays an essential structural role and its presence is essential for fluoride channel function. Fluoride-specific ion channel. Important for reducing fluoride concentration in the cell, thus reducing its toxicity. This chain is Fluoride-specific ion channel FluC, found in Bordetella avium (strain 197N).